The following is a 483-amino-acid chain: FK506-binding protein 4 (483 aa).

2 disordered regions span residues 41 to 171 (TAEP…EEFV) and 208 to 371 (TGNY…LKKP). The segment covering 68–93 (EEDDDEYLDIDGEDSEDDEESDDEEV) has biased composition (acidic residues). Basic and acidic residues-rich tracts occupy residues 108-121 (REAA…ATKE) and 130-150 (ADAK…KASE). Acidic residues-rich tracts occupy residues 151–167 (SDDE…EPNF), 216–233 (GQDE…DEEY), and 241–256 (LESD…DEID). 3 stretches are compositionally biased toward basic and acidic residues: residues 298 to 309 (LVAKDKKQAEKQ), 323 to 344 (ENKD…KDLE), and 351 to 370 (AKDK…DLKK). A PPIase FKBP-type domain is found at 397 to 483 (GDRVSLRYIG…VFDIKLLEIK (87 aa)).

This sequence belongs to the FKBP-type PPIase family. FKBP3/4 subfamily. In terms of assembly, binds to histones H3 and H4.

It localises to the nucleus. The enzyme catalyses [protein]-peptidylproline (omega=180) = [protein]-peptidylproline (omega=0). Its function is as follows. PPIase that acts as a histone chaperone. Histone proline isomerase that increases the rate of cis-trans isomerization at prolines on the histone H3 N-terminal tail. Proline isomerization influences H3 methylation thereby regulating gene expression. This chain is FK506-binding protein 4 (FPR4), found in Chaetomium thermophilum (strain DSM 1495 / CBS 144.50 / IMI 039719) (Thermochaetoides thermophila).